A 502-amino-acid chain; its full sequence is UPF0371 protein CLL_A2797 (502 aa).

Belongs to the UPF0371 family.

This is UPF0371 protein CLL_A2797 from Clostridium botulinum (strain Eklund 17B / Type B).